Here is a 209-residue protein sequence, read N- to C-terminus: Imidazole glycerol phosphate synthase subunit HisH (209 aa).

Residues 1–205 (MIAIIDYGMG…QGVVEAWKSS (205 aa)) enclose the Glutamine amidotransferase type-1 domain. Cys79 serves as the catalytic Nucleophile. Active-site residues include His180 and Glu182.

Heterodimer of HisH and HisF.

It is found in the cytoplasm. The catalysed reaction is 5-[(5-phospho-1-deoxy-D-ribulos-1-ylimino)methylamino]-1-(5-phospho-beta-D-ribosyl)imidazole-4-carboxamide + L-glutamine = D-erythro-1-(imidazol-4-yl)glycerol 3-phosphate + 5-amino-1-(5-phospho-beta-D-ribosyl)imidazole-4-carboxamide + L-glutamate + H(+). It carries out the reaction L-glutamine + H2O = L-glutamate + NH4(+). It functions in the pathway amino-acid biosynthesis; L-histidine biosynthesis; L-histidine from 5-phospho-alpha-D-ribose 1-diphosphate: step 5/9. IGPS catalyzes the conversion of PRFAR and glutamine to IGP, AICAR and glutamate. The HisH subunit catalyzes the hydrolysis of glutamine to glutamate and ammonia as part of the synthesis of IGP and AICAR. The resulting ammonia molecule is channeled to the active site of HisF. The chain is Imidazole glycerol phosphate synthase subunit HisH from Bacillus cereus (strain G9842).